The primary structure comprises 321 residues: Aspartate carbamoyltransferase catalytic subunit (321 aa).

Residues Arg-70 and Thr-71 each contribute to the carbamoyl phosphate site. Residue Lys-98 participates in L-aspartate binding. Positions 120, 148, and 151 each coordinate carbamoyl phosphate. Positions 181 and 235 each coordinate L-aspartate. Gly-276 and Pro-277 together coordinate carbamoyl phosphate.

This sequence belongs to the aspartate/ornithine carbamoyltransferase superfamily. ATCase family. In terms of assembly, heterododecamer (2C3:3R2) of six catalytic PyrB chains organized as two trimers (C3), and six regulatory PyrI chains organized as three dimers (R2).

It carries out the reaction carbamoyl phosphate + L-aspartate = N-carbamoyl-L-aspartate + phosphate + H(+). The protein operates within pyrimidine metabolism; UMP biosynthesis via de novo pathway; (S)-dihydroorotate from bicarbonate: step 2/3. In terms of biological role, catalyzes the condensation of carbamoyl phosphate and aspartate to form carbamoyl aspartate and inorganic phosphate, the committed step in the de novo pyrimidine nucleotide biosynthesis pathway. The sequence is that of Aspartate carbamoyltransferase catalytic subunit from Gluconacetobacter diazotrophicus (strain ATCC 49037 / DSM 5601 / CCUG 37298 / CIP 103539 / LMG 7603 / PAl5).